We begin with the raw amino-acid sequence, 862 residues long: DNA mismatch repair protein MutS (862 aa).

Position 608 to 615 (608 to 615) interacts with ATP; sequence GPNMAGKS.

The protein belongs to the DNA mismatch repair MutS family.

Its function is as follows. This protein is involved in the repair of mismatches in DNA. It is possible that it carries out the mismatch recognition step. This protein has a weak ATPase activity. In Borreliella afzelii (strain PKo) (Borrelia afzelii), this protein is DNA mismatch repair protein MutS.